Reading from the N-terminus, the 197-residue chain is Elongation factor Ts (197 aa).

Residues 81-84 (TDFV) form an involved in Mg(2+) ion dislocation from EF-Tu region.

This sequence belongs to the EF-Ts family.

The protein resides in the cytoplasm. Functionally, associates with the EF-Tu.GDP complex and induces the exchange of GDP to GTP. It remains bound to the aminoacyl-tRNA.EF-Tu.GTP complex up to the GTP hydrolysis stage on the ribosome. In Petrotoga mobilis (strain DSM 10674 / SJ95), this protein is Elongation factor Ts.